The following is a 398-amino-acid chain: Subtilisin-like protease CPC735_015300 (398 aa).

A signal peptide spans 1–19 (MGFIKTLSLSLAAASAANA). Positions 20-116 (AKILSPSRPD…IEHDHVVRLT (97 aa)) are excised as a propeptide. The Inhibitor I9 domain occupies 35–115 (QYIVVMKDGV…FIEHDHVVRL (81 aa)). The region spanning 126 to 398 (TWGLGRVSHQ…NKLTYNGNGQ (273 aa)) is the Peptidase S8 domain. Catalysis depends on charge relay system residues Asp158 and His189. Asn250 carries an N-linked (GlcNAc...) asparagine glycan. Residue Ser344 is the Charge relay system of the active site. Asn362 is a glycosylation site (N-linked (GlcNAc...) asparagine).

It belongs to the peptidase S8 family.

Its subcellular location is the secreted. Secreted subtilisin-like serine protease with keratinolytic activity that contributes to pathogenicity. The protein is Subtilisin-like protease CPC735_015300 of Coccidioides posadasii (strain C735) (Valley fever fungus).